Reading from the N-terminus, the 231-residue chain is Large ribosomal subunit protein uL1 (231 aa).

It belongs to the universal ribosomal protein uL1 family. As to quaternary structure, part of the 50S ribosomal subunit.

Functionally, binds directly to 23S rRNA. The L1 stalk is quite mobile in the ribosome, and is involved in E site tRNA release. In terms of biological role, protein L1 is also a translational repressor protein, it controls the translation of the L11 operon by binding to its mRNA. This Staphylococcus epidermidis (strain ATCC 35984 / DSM 28319 / BCRC 17069 / CCUG 31568 / BM 3577 / RP62A) protein is Large ribosomal subunit protein uL1.